Reading from the N-terminus, the 208-residue chain is Adenylyl-sulfate kinase 3 (208 aa).

Position 37-45 (37-45 (GLSGSGKST)) interacts with ATP. Substrate contacts are provided by residues Asp67, Arg70, Arg84, Asn87, 110–111 (IS), and Gly160. Ser111 (phosphoserine intermediate) is an active-site residue.

It belongs to the APS kinase family. As to expression, expressed in root vasculature, root tips, leaf epidermal and guard cells, pollen grains and radicle of immature seeds.

It is found in the cytoplasm. The protein resides in the cytosol. The enzyme catalyses adenosine 5'-phosphosulfate + ATP = 3'-phosphoadenylyl sulfate + ADP + H(+). The protein operates within sulfur metabolism; hydrogen sulfide biosynthesis; sulfite from sulfate: step 2/3. Catalyzes the synthesis of activated sulfate for the sulfation of secondary metabolites, including the glucosinolates. Essential for plant reproduction and viability. The protein is Adenylyl-sulfate kinase 3 of Arabidopsis thaliana (Mouse-ear cress).